We begin with the raw amino-acid sequence, 63 residues long: MKAQDLREKSVEELNAELLNLLREQFNLRMQAATGQLQQTHTLKAVRRDIARVKTVLTEKAGA.

It belongs to the universal ribosomal protein uL29 family.

In Vibrio campbellii (strain ATCC BAA-1116), this protein is Large ribosomal subunit protein uL29.